The primary structure comprises 305 residues: MTQRRAMLILHGKQALNEDVRDAVADKRKQGWELDVRLTWEAGDARRLVGEALAAGHRHIVAGGGDGTLRDIAEALALAETQASLTILPLGTANDFARAAGVPLEVSKALQLMDVAPRAVDLGEVGGKLFLNMATGGFGSQVTANTSEDLKKVLGGAAYLFTGLTRFSELHAAHGELTGPDFHWRGDLLALGIGNGRQAGGGHELCPTALADDGLLDISILPAPQEVVGTLRSLLEGGLGIDNMFIRTRLPWVELKSAQGLDINLDGEPLSGEDLRFEARPGALQVHLPADSPVLSRAPMLNRPD.

In terms of domain architecture, DAGKc spans 1-129 (MTQRRAMLIL…VDLGEVGGKL (129 aa)). ATP contacts are provided by residues threonine 39, 65–71 (GDGTLRD), and threonine 92. Leucine 210, aspartate 213, and leucine 215 together coordinate Mg(2+). The active-site Proton acceptor is the glutamate 268.

The protein belongs to the diacylglycerol/lipid kinase family. YegS lipid kinase subfamily. Mg(2+) is required as a cofactor. Requires Ca(2+) as cofactor.

The protein resides in the cytoplasm. Functionally, probably phosphorylates lipids; the in vivo substrate is unknown. The sequence is that of Probable lipid kinase YegS-like from Pseudomonas savastanoi pv. phaseolicola (strain 1448A / Race 6) (Pseudomonas syringae pv. phaseolicola (strain 1448A / Race 6)).